Here is a 107-residue protein sequence, read N- to C-terminus: Phosphoribosyl-ATP pyrophosphatase (107 aa).

The protein belongs to the PRA-PH family.

It localises to the cytoplasm. It carries out the reaction 1-(5-phospho-beta-D-ribosyl)-ATP + H2O = 1-(5-phospho-beta-D-ribosyl)-5'-AMP + diphosphate + H(+). Its pathway is amino-acid biosynthesis; L-histidine biosynthesis; L-histidine from 5-phospho-alpha-D-ribose 1-diphosphate: step 2/9. This Bacillus cereus (strain ATCC 14579 / DSM 31 / CCUG 7414 / JCM 2152 / NBRC 15305 / NCIMB 9373 / NCTC 2599 / NRRL B-3711) protein is Phosphoribosyl-ATP pyrophosphatase.